The primary structure comprises 497 residues: uncharacterized protein (497 aa).

The span at 44 to 74 (IRQEKEMKRHDDDGRQYQSDRKFAKSKHDDI) shows a compositional bias: basic and acidic residues. Disordered stretches follow at residues 44-95 (IRQE…SVGR), 120-151 (VSRS…EHRD), and 195-227 (GNVI…TSAR). Residues 120 to 131 (VSRSSSIGHSGS) are compositionally biased toward low complexity. Ser-123, Ser-125, and Ser-131 each carry phosphoserine. Residue Thr-132 is modified to Phosphothreonine. Low complexity predominate over residues 213–227 (ASLSRAASNSSTSAR). Phosphothreonine is present on Thr-258. Phosphoserine is present on Ser-310. The span at 367–385 (NVNPSNQDLASVKQPSGFS) shows a compositional bias: polar residues. The interval 367–497 (NVNPSNQDLA…GFPDTSRPPH (131 aa)) is disordered. The span at 400-409 (NFSNDDSSFF) shows a compositional bias: low complexity. Ser-436 is subject to Phosphoserine. Residues 448–472 (GLSSGASIPSAPPGFGYQQPSFPYS) show a composition bias toward low complexity.

The protein resides in the cytoplasm. Its subcellular location is the nucleus. This is an uncharacterized protein from Schizosaccharomyces pombe (strain 972 / ATCC 24843) (Fission yeast).